The chain runs to 948 residues: Protocadherin alpha-2 (948 aa).

An N-terminal signal peptide occupies residues 1–22 (MASSIRRGRGAWTRLLSLLLLA). Over 23 to 697 (AWEVGSGQLR…GSEATLVDVN (675 aa)) the chain is Extracellular. Cadherin domains follow at residues 30-133 (QLRY…PPIF), 157-242 (ASDA…EPTF), 243-350 (AQSV…TPEV), 351-455 (SITS…APAF), 456-565 (AQPE…APAL), and 588-678 (GHVV…APKA). Residues asparagine 257, asparagine 265, asparagine 362, and asparagine 548 are each glycosylated (N-linked (GlcNAc...) asparagine). A helical transmembrane segment spans residues 698–718 (VYLIIAICAVSSLLVLTVLLY). At 719–948 (TALRCSVPPT…GNSTTDNSDQ (230 aa)) the chain is on the cytoplasmic side. One copy of the PXXP 1 repeat lies at 734-737 (PGKP). Residues 734 to 892 (PGKPTLVCSS…PDKFIIPGSP (159 aa)) form a 5 X 4 AA repeats of P-X-X-P region. 3 disordered regions span residues 754-801 (RRQR…RQPN), 829-854 (GPGGPDQQWPTVSSATPEPEAGEVSP), and 868-948 (KYGP…NSDQ). Over residues 783 to 795 (AEEKQLSESEYVG) the composition is skewed to basic and acidic residues. PXXP repeat units follow at residues 797–800 (PRQP), 830–833 (PGGP), 871–874 (PGNP), and 889–892 (PGSP). The span at 907 to 921 (DKSDFITFGKKEETK) shows a compositional bias: basic and acidic residues.

It localises to the cell membrane. Its function is as follows. Potential calcium-dependent cell-adhesion protein. May be involved in the establishment and maintenance of specific neuronal connections in the brain. This chain is Protocadherin alpha-2 (PCDHA2), found in Homo sapiens (Human).